A 243-amino-acid chain; its full sequence is Leucyl/phenylalanyl-tRNA--protein transferase (243 aa).

The protein belongs to the L/F-transferase family.

The protein resides in the cytoplasm. The enzyme catalyses N-terminal L-lysyl-[protein] + L-leucyl-tRNA(Leu) = N-terminal L-leucyl-L-lysyl-[protein] + tRNA(Leu) + H(+). It catalyses the reaction N-terminal L-arginyl-[protein] + L-leucyl-tRNA(Leu) = N-terminal L-leucyl-L-arginyl-[protein] + tRNA(Leu) + H(+). The catalysed reaction is L-phenylalanyl-tRNA(Phe) + an N-terminal L-alpha-aminoacyl-[protein] = an N-terminal L-phenylalanyl-L-alpha-aminoacyl-[protein] + tRNA(Phe). In terms of biological role, functions in the N-end rule pathway of protein degradation where it conjugates Leu, Phe and, less efficiently, Met from aminoacyl-tRNAs to the N-termini of proteins containing an N-terminal arginine or lysine. This is Leucyl/phenylalanyl-tRNA--protein transferase from Vibrio cholerae serotype O1 (strain ATCC 39541 / Classical Ogawa 395 / O395).